The primary structure comprises 149 residues: Deoxyuridine 5'-triphosphate nucleotidohydrolase (149 aa).

Residues 68–70 (RSG), N81, 85–87 (LID), and M95 contribute to the substrate site.

This sequence belongs to the dUTPase family. The cofactor is Mg(2+).

The catalysed reaction is dUTP + H2O = dUMP + diphosphate + H(+). Its pathway is pyrimidine metabolism; dUMP biosynthesis; dUMP from dCTP (dUTP route): step 2/2. In terms of biological role, this enzyme is involved in nucleotide metabolism: it produces dUMP, the immediate precursor of thymidine nucleotides and it decreases the intracellular concentration of dUTP so that uracil cannot be incorporated into DNA. This chain is Deoxyuridine 5'-triphosphate nucleotidohydrolase, found in Bordetella bronchiseptica (strain ATCC BAA-588 / NCTC 13252 / RB50) (Alcaligenes bronchisepticus).